Reading from the N-terminus, the 682-residue chain is Two-component system protein A (682 aa).

The segment at 11–41 is disordered; it reads SLDDNDNGQQHQDEVQAKHQDQGHTCPSRPS. A compositionally biased stretch (basic and acidic residues) spans 21–32; it reads HQDEVQAKHQDQ. 2 PAS domains span residues 45–105 and 166–239; these read LSRI…PILY and MNET…LREG. In terms of domain architecture, PAC spans 241-292; the sequence is IEDEGWRYRRDGSRFWANVLITPIYQFGQHVGFVKVTRDLTERKEAEACMIA. The Histidine kinase domain maps to 307–530; sequence NISHEIRTPM…VFWFTAKMGG (224 aa). H310 bears the Phosphohistidine; by autocatalysis mark. The 118-residue stretch at 563-680 folds into the Response regulatory domain; the sequence is HVLLVEDNIV…QLLRVLWKWF (118 aa). The residue at position 615 (D615) is a 4-aspartylphosphate.

In terms of processing, activation probably requires a transfer of a phosphate group between a His in the histidine kinase domain and an Asp of the response regulatory domain.

It is found in the cytoplasm. The catalysed reaction is ATP + protein L-histidine = ADP + protein N-phospho-L-histidine.. May be part of a two-component regulatory system required for formation of conidia on certain growth media. The protein is Two-component system protein A of Emericella nidulans (strain FGSC A4 / ATCC 38163 / CBS 112.46 / NRRL 194 / M139) (Aspergillus nidulans).